A 1447-amino-acid polypeptide reads, in one-letter code: Gag-Pol polyprotein (1447 aa).

The N-myristoyl glycine; by host moiety is linked to residue Gly-2. Residues 7-31 (VLSGGELDRWEKIRLRPGGKKKYKL) are interaction with Gp41. An interaction with host CALM1 region spans residues 8 to 43 (LSGGELDRWEKIRLRPGGKKKYKLKHIVWASRELER). The tract at residues 12 to 19 (ELDRWEKI) is interaction with host AP3D1. The tract at residues 14 to 33 (DRWEKIRLRPGGKKKYKLKH) is interaction with membrane phosphatidylinositol 4,5-bisphosphate and RNA. Residues 16–22 (WEKIRLR) carry the Nuclear export signal motif. Positions 26 to 32 (KKKYKLK) match the Nuclear localization signal motif. The segment at 73–77 (EELRS) is interaction with membrane phosphatidylinositol 4,5-bisphosphate. The disordered stretch occupies residues 106-128 (EEQNKSKKKAQQAAADTGHSSQV). Phosphotyrosine; by host is present on Tyr-132. The segment at 189 to 227 (NTVGGHQAAMQMLKETINEEAAEWDRVHPVHAGPIAPGQ) is interaction with human PPIA/CYPA and NUP153. Residues 277–363 (YSPTSILDIR…GGPGHKARVL (87 aa)) form a dimerization/Multimerization of capsid protein p24 region. At Arg-387 the chain carries Asymmetric dimethylarginine; in Nucleocapsid protein p7; by host PRMT6. A CCHC-type 1 zinc finger spans residues 390 to 407 (VKCFNCGKEGHTARNCRA). Residue Arg-409 is modified to Asymmetric dimethylarginine; in Nucleocapsid protein p7; by host PRMT6. The segment at 411–428 (KGCWKCGKEGHQMKDCTE) adopts a CCHC-type 2 zinc-finger fold. Residues 446–493 (REFSSEQTRANSPTISSEQTRANSPTRRELQVWGRDNNSPSEAGADRQ) form a disordered region. Polar residues predominate over residues 450 to 470 (SEQTRANSPTISSEQTRANSP). Residues 501 to 505 (PQITL) are dimerization of protease. Residues 520–589 (KEALLDTGAD…TPVNIIGRNL (70 aa)) enclose the Peptidase A2 domain. The For protease activity; shared with dimeric partner role is filled by Asp-525. Dimerization of protease regions lie at residues 549–555 (GIGGFIK) and 588–600 (NLLTQIGCTLNFP). The Reverse transcriptase domain occupies 643–833 (EGKISKIGPE…PPFLWMGYEL (191 aa)). Asp-709, Asp-784, and Asp-785 together coordinate Mg(2+). Residues 826–834 (FLWMGYELH) form an RT 'primer grip' region. The Tryptophan repeat motif signature appears at 997 to 1013 (WETWWTEYWQATWIPEW). Residues 1033–1156 (IVGAETFYVD…VDKLVSAGIR (124 aa)) enclose the RNase H type-1 domain. Mg(2+) contacts are provided by Asp-1042, Glu-1077, Asp-1097, and Asp-1148. The Integrase-type zinc finger occupies 1162 to 1203 (DGIDKAQDEHEKYHSNWRAMASDFNLPPVVAKEIVASCDKCQ). Residues His-1171, His-1175, Cys-1199, and Cys-1202 each contribute to the Zn(2+) site. One can recognise an Integrase catalytic domain in the interval 1213-1363 (VDCSPGIWQL…SAGERIVDII (151 aa)). Residues Asp-1223, Asp-1275, and Glu-1311 each coordinate Mg(2+). The segment at residues 1382-1429 (FRVYYRDSRNPLWKGPAKLLWKGEGAVVIQDNSDIKVVPRRKAKIIRD) is a DNA-binding region (integrase-type).

Homotrimer; further assembles as hexamers of trimers. Interacts with gp41 (via C-terminus). Interacts with host CALM1; this interaction induces a conformational change in the Matrix protein, triggering exposure of the myristate group. Interacts with host AP3D1; this interaction allows the polyprotein trafficking to multivesicular bodies during virus assembly. Part of the pre-integration complex (PIC) which is composed of viral genome, matrix protein, Vpr and integrase. In terms of assembly, homodimer; the homodimer further multimerizes as homohexamers or homopentamers. Interacts with human PPIA/CYPA; This interaction stabilizes the capsid. Interacts with human NUP153. Interacts with host PDZD8; this interaction stabilizes the capsid. Interacts with monkey TRIM5; this interaction destabilizes the capsid. As to quaternary structure, homodimer, whose active site consists of two apposed aspartic acid residues. Heterodimer of p66 RT and p51 RT (RT p66/p51). Heterodimerization of RT is essential for DNA polymerase activity. The overall folding of the subdomains is similar in p66 RT and p51 RT but the spatial arrangements of the subdomains are dramatically different. In terms of assembly, homotetramer; may further associate as a homohexadecamer. Part of the pre-integration complex (PIC) which is composed of viral genome, matrix protein, Vpr and integrase. Interacts with human SMARCB1/INI1 and human PSIP1/LEDGF isoform 1. Interacts with human KPNA3; this interaction might play a role in nuclear import of the pre-integration complex. Interacts with human NUP153; this interaction might play a role in nuclear import of the pre-integration complex. It depends on Mg(2+) as a cofactor. In terms of processing, specific enzymatic cleavages by the viral protease yield mature proteins. The protease is released by autocatalytic cleavage. The polyprotein is cleaved during and after budding, this process is termed maturation. Proteolytic cleavage of p66 RT removes the RNase H domain to yield the p51 RT subunit. Nucleocapsid protein p7 might be further cleaved after virus entry. Tyrosine phosphorylated presumably in the virion by a host kinase. Phosphorylation is apparently not a major regulator of membrane association. Post-translationally, phosphorylated possibly by host MAPK1; this phosphorylation is necessary for Pin1-mediated virion uncoating. In terms of processing, methylated by host PRMT6, impairing its function by reducing RNA annealing and the initiation of reverse transcription.

It localises to the host cell membrane. The protein localises to the host endosome. The protein resides in the host multivesicular body. It is found in the virion membrane. Its subcellular location is the host nucleus. It localises to the host cytoplasm. The protein localises to the virion. It carries out the reaction Specific for a P1 residue that is hydrophobic, and P1' variable, but often Pro.. The enzyme catalyses 3'-end directed exonucleolytic cleavage of viral RNA-DNA hybrid.. The catalysed reaction is Endohydrolysis of RNA in RNA/DNA hybrids. Three different cleavage modes: 1. sequence-specific internal cleavage of RNA. Human immunodeficiency virus type 1 and Moloney murine leukemia virus enzymes prefer to cleave the RNA strand one nucleotide away from the RNA-DNA junction. 2. RNA 5'-end directed cleavage 13-19 nucleotides from the RNA end. 3. DNA 3'-end directed cleavage 15-20 nucleotides away from the primer terminus.. It catalyses the reaction DNA(n) + a 2'-deoxyribonucleoside 5'-triphosphate = DNA(n+1) + diphosphate. Protease: The viral protease is inhibited by many synthetic protease inhibitors (PIs), such as amprenavir, atazanavir, indinavir, loprinavir, nelfinavir, ritonavir and saquinavir. Use of protease inhibitors in tritherapy regimens permit more ambitious therapeutic strategies. Reverse transcriptase/ribonuclease H: RT can be inhibited either by nucleoside RT inhibitors (NRTIs) or by non nucleoside RT inhibitors (NNRTIs). NRTIs act as chain terminators, whereas NNRTIs inhibit DNA polymerization by binding a small hydrophobic pocket near the RT active site and inducing an allosteric change in this region. Classical NRTIs are abacavir, adefovir (PMEA), didanosine (ddI), lamivudine (3TC), stavudine (d4T), tenofovir (PMPA), zalcitabine (ddC), and zidovudine (AZT). Classical NNRTIs are atevirdine (BHAP U-87201E), delavirdine, efavirenz (DMP-266), emivirine (I-EBU), and nevirapine (BI-RG-587). The tritherapies used as a basic effective treatment of AIDS associate two NRTIs and one NNRTI. Its function is as follows. Mediates, with Gag polyprotein, the essential events in virion assembly, including binding the plasma membrane, making the protein-protein interactions necessary to create spherical particles, recruiting the viral Env proteins, and packaging the genomic RNA via direct interactions with the RNA packaging sequence (Psi). Gag-Pol polyprotein may regulate its own translation, by the binding genomic RNA in the 5'-UTR. At low concentration, the polyprotein would promote translation, whereas at high concentration, the polyprotein would encapsidate genomic RNA and then shut off translation. In terms of biological role, targets the polyprotein to the plasma membrane via a multipartite membrane-binding signal, that includes its myristoylated N-terminus. Matrix protein is part of the pre-integration complex. Implicated in the release from host cell mediated by Vpu. Binds to RNA. Functionally, forms the conical core that encapsulates the genomic RNA-nucleocapsid complex in the virion. Most core are conical, with only 7% tubular. The core is constituted by capsid protein hexamer subunits. The core is disassembled soon after virion entry. Host restriction factors such as TRIM5-alpha or TRIMCyp bind retroviral capsids and cause premature capsid disassembly, leading to blocks in reverse transcription. Capsid restriction by TRIM5 is one of the factors which restricts HIV-1 to the human species. Host PIN1 apparently facilitates the virion uncoating. On the other hand, interactions with PDZD8 or CYPA stabilize the capsid. Encapsulates and protects viral dimeric unspliced genomic RNA (gRNA). Binds these RNAs through its zinc fingers. Acts as a nucleic acid chaperone which is involved in rearangement of nucleic acid secondary structure during gRNA retrotranscription. Also facilitates template switch leading to recombination. As part of the polyprotein, participates in gRNA dimerization, packaging, tRNA incorporation and virion assembly. Its function is as follows. Aspartyl protease that mediates proteolytic cleavages of Gag and Gag-Pol polyproteins during or shortly after the release of the virion from the plasma membrane. Cleavages take place as an ordered, step-wise cascade to yield mature proteins. This process is called maturation. Displays maximal activity during the budding process just prior to particle release from the cell. Also cleaves Nef and Vif, probably concomitantly with viral structural proteins on maturation of virus particles. Hydrolyzes host EIF4GI and PABP1 in order to shut off the capped cellular mRNA translation. The resulting inhibition of cellular protein synthesis serves to ensure maximal viral gene expression and to evade host immune response. Also mediates cleavage of host YTHDF3. Mediates cleavage of host CARD8, thereby activating the CARD8 inflammasome, leading to the clearance of latent HIV-1 in patient CD4(+) T-cells after viral reactivation; in contrast, HIV-1 can evade CARD8-sensing when its protease remains inactive in infected cells prior to viral budding. In terms of biological role, multifunctional enzyme that converts the viral RNA genome into dsDNA in the cytoplasm, shortly after virus entry into the cell. This enzyme displays a DNA polymerase activity that can copy either DNA or RNA templates, and a ribonuclease H (RNase H) activity that cleaves the RNA strand of RNA-DNA heteroduplexes in a partially processive 3' to 5' endonucleasic mode. Conversion of viral genomic RNA into dsDNA requires many steps. A tRNA(3)-Lys binds to the primer-binding site (PBS) situated at the 5'-end of the viral RNA. RT uses the 3' end of the tRNA primer to perform a short round of RNA-dependent minus-strand DNA synthesis. The reading proceeds through the U5 region and ends after the repeated (R) region which is present at both ends of viral RNA. The portion of the RNA-DNA heteroduplex is digested by the RNase H, resulting in a ssDNA product attached to the tRNA primer. This ssDNA/tRNA hybridizes with the identical R region situated at the 3' end of viral RNA. This template exchange, known as minus-strand DNA strong stop transfer, can be either intra- or intermolecular. RT uses the 3' end of this newly synthesized short ssDNA to perform the RNA-dependent minus-strand DNA synthesis of the whole template. RNase H digests the RNA template except for two polypurine tracts (PPTs) situated at the 5'-end and near the center of the genome. It is not clear if both polymerase and RNase H activities are simultaneous. RNase H probably can proceed both in a polymerase-dependent (RNA cut into small fragments by the same RT performing DNA synthesis) and a polymerase-independent mode (cleavage of remaining RNA fragments by free RTs). Secondly, RT performs DNA-directed plus-strand DNA synthesis using the PPTs that have not been removed by RNase H as primers. PPTs and tRNA primers are then removed by RNase H. The 3' and 5' ssDNA PBS regions hybridize to form a circular dsDNA intermediate. Strand displacement synthesis by RT to the PBS and PPT ends produces a blunt ended, linear dsDNA copy of the viral genome that includes long terminal repeats (LTRs) at both ends. Functionally, catalyzes viral DNA integration into the host chromosome, by performing a series of DNA cutting and joining reactions. This enzyme activity takes place after virion entry into a cell and reverse transcription of the RNA genome in dsDNA. The first step in the integration process is 3' processing. This step requires a complex comprising the viral genome, matrix protein, Vpr and integrase. This complex is called the pre-integration complex (PIC). The integrase protein removes 2 nucleotides from each 3' end of the viral DNA, leaving recessed CA OH's at the 3' ends. In the second step, the PIC enters cell nucleus. This process is mediated through integrase and Vpr proteins, and allows the virus to infect a non dividing cell. This ability to enter the nucleus is specific of lentiviruses, other retroviruses cannot and rely on cell division to access cell chromosomes. In the third step, termed strand transfer, the integrase protein joins the previously processed 3' ends to the 5' ends of strands of target cellular DNA at the site of integration. The 5'-ends are produced by integrase-catalyzed staggered cuts, 5 bp apart. A Y-shaped, gapped, recombination intermediate results, with the 5'-ends of the viral DNA strands and the 3' ends of target DNA strands remaining unjoined, flanking a gap of 5 bp. The last step is viral DNA integration into host chromosome. This involves host DNA repair synthesis in which the 5 bp gaps between the unjoined strands are filled in and then ligated. Since this process occurs at both cuts flanking the HIV genome, a 5 bp duplication of host DNA is produced at the ends of HIV-1 integration. Alternatively, Integrase may catalyze the excision of viral DNA just after strand transfer, this is termed disintegration. The chain is Gag-Pol polyprotein (gag-pol) from Human immunodeficiency virus type 1 group M subtype B (isolate BH10) (HIV-1).